Consider the following 665-residue polypeptide: Ribonuclease R 2 (665 aa).

Residues 202-528 (REDYRNEITY…LIIHRLLHLY (327 aa)) enclose the RNB domain. The region spanning 579–662 (GEVYTGTITG…RKGTVDFEQI (84 aa)) is the S1 motif domain.

The protein belongs to the RNR ribonuclease family. RNase R subfamily.

It is found in the cytoplasm. It catalyses the reaction Exonucleolytic cleavage in the 3'- to 5'-direction to yield nucleoside 5'-phosphates.. 3'-5' exoribonuclease that releases 5'-nucleoside monophosphates and is involved in maturation of structured RNAs. The chain is Ribonuclease R 2 from Lactococcus lactis subsp. lactis (strain IL1403) (Streptococcus lactis).